A 698-amino-acid polypeptide reads, in one-letter code: Polyphosphate kinase (698 aa).

Asn63 is an ATP binding site. 2 residues coordinate Mg(2+): Arg390 and Arg420. The active-site Phosphohistidine intermediate is the His450. ATP-binding residues include Tyr483, Arg579, and His607.

Belongs to the polyphosphate kinase 1 (PPK1) family. Mg(2+) serves as cofactor. In terms of processing, an intermediate of this reaction is the autophosphorylated ppk in which a phosphate is covalently linked to a histidine residue through a N-P bond.

The catalysed reaction is [phosphate](n) + ATP = [phosphate](n+1) + ADP. Functionally, catalyzes the reversible transfer of the terminal phosphate of ATP to form a long-chain polyphosphate (polyP). This Xylella fastidiosa (strain Temecula1 / ATCC 700964) protein is Polyphosphate kinase.